A 445-amino-acid chain; its full sequence is UPF0210 protein SMU_73 (445 aa).

The protein belongs to the UPF0210 family. Homodimer.

The protein is UPF0210 protein SMU_73 of Streptococcus mutans serotype c (strain ATCC 700610 / UA159).